A 633-amino-acid polypeptide reads, in one-letter code: Molybdenum cofactor biosynthesis protein 1 (633 aa).

The interval 1–380 (MAAQPVSRVV…QMKNRPMILI (380 aa)) is molybdenum cofactor biosynthesis protein A. Position 61 is a phosphoserine (Ser-61). One can recognise a Radical SAM core domain in the interval 61–295 (SFGRHHSYLR…AKAFKIPGFR (235 aa)). Residue Arg-70 coordinates GTP. Residues Cys-77 and Cys-81 each contribute to the [4Fe-4S] cluster site. Tyr-83 serves as a coordination point for S-adenosyl-L-methionine. Cys-84 lines the [4Fe-4S] cluster pocket. Arg-120 is a binding site for GTP. Gly-124 contacts S-adenosyl-L-methionine. Residue Thr-151 participates in GTP binding. Ser-175 contacts S-adenosyl-L-methionine. Lys-195 carries the post-translational modification N6-acetyllysine. A GTP-binding site is contributed by Lys-212. Met-246 is an S-adenosyl-L-methionine binding site. [4Fe-4S] cluster is bound by residues Cys-309 and Cys-312. 314 to 316 (RLR) is a GTP binding site. Cys-326 is a binding site for [4Fe-4S] cluster. The segment at 410–633 (VSFSSQMVTL…GGQRGDFHRT (224 aa)) is molybdenum cofactor biosynthesis protein C. Residues 446–480 (SSHLDSDANPKCLSPTEPQAPAASSGPLPDSDQLT) are disordered. Lys-525 carries the post-translational modification N6-acetyllysine. Asp-603 acts as the For molybdenum cofactor biosynthesis protein C activity in catalysis.

In the C-terminal section; belongs to the MoaC family. The protein in the N-terminal section; belongs to the radical SAM superfamily. MoaA family. As to quaternary structure, isoform MOCS1A and isoform MOCS1B probably form a heterooligomer. It depends on [4Fe-4S] cluster as a cofactor.

It catalyses the reaction GTP + AH2 + S-adenosyl-L-methionine = (8S)-3',8-cyclo-7,8-dihydroguanosine 5'-triphosphate + 5'-deoxyadenosine + L-methionine + A + H(+). The enzyme catalyses (8S)-3',8-cyclo-7,8-dihydroguanosine 5'-triphosphate = cyclic pyranopterin phosphate + diphosphate. Its pathway is cofactor biosynthesis; molybdopterin biosynthesis. Functionally, isoform MOCS1A and isoform MOCS1B probably form a complex that catalyzes the conversion of 5'-GTP to cyclic pyranopterin monophosphate (cPMP). MOCS1A catalyzes the cyclization of GTP to (8S)-3',8-cyclo-7,8-dihydroguanosine 5'-triphosphate and MOCS1B catalyzes the subsequent conversion of (8S)-3',8-cyclo-7,8-dihydroguanosine 5'-triphosphate to cPMP. In Bos taurus (Bovine), this protein is Molybdenum cofactor biosynthesis protein 1 (MOCS1).